Reading from the N-terminus, the 949-residue chain is AP-1 complex subunit beta-1 (949 aa).

At K318 the chain carries N6-acetyllysine. A 3'-nitrotyrosine modification is found at Y574. Positions 584–625 (GGRGVVHKSLPPRTASSESAESPETAPTGAPPGEQPDVIPAQ) are disordered. Positions 594–611 (PPRTASSESAESPETAPT) are enriched in low complexity.

This sequence belongs to the adaptor complexes large subunit family. In terms of assembly, adaptor protein complex 1 (AP-1) is a heterotetramer composed of two large adaptins (gamma-type subunit AP1G1 and beta-type subunit AP1B1), a medium adaptin (mu-type subunit AP1M1 or AP1M2) and a small adaptin (sigma-type subunit AP1S1 or AP1S2 or AP1S3). In terms of tissue distribution, widely expressed.

It localises to the golgi apparatus. Its subcellular location is the cytoplasmic vesicle. It is found in the clathrin-coated vesicle membrane. In terms of biological role, subunit of clathrin-associated adaptor protein complex 1 that plays a role in protein sorting in the late-Golgi/trans-Golgi network (TGN) and/or endosomes. The AP complexes mediate both the recruitment of clathrin to membranes and the recognition of sorting signals within the cytosolic tails of transmembrane cargo molecules. In Homo sapiens (Human), this protein is AP-1 complex subunit beta-1 (AP1B1).